A 203-amino-acid polypeptide reads, in one-letter code: ATP-dependent Clp protease proteolytic subunit 1 (203 aa).

Ser-101 serves as the catalytic Nucleophile. His-126 is an active-site residue.

The protein belongs to the peptidase S14 family. Fourteen ClpP subunits assemble into 2 heptameric rings which stack back to back to give a disk-like structure with a central cavity, resembling the structure of eukaryotic proteasomes.

The protein resides in the cytoplasm. It catalyses the reaction Hydrolysis of proteins to small peptides in the presence of ATP and magnesium. alpha-casein is the usual test substrate. In the absence of ATP, only oligopeptides shorter than five residues are hydrolyzed (such as succinyl-Leu-Tyr-|-NHMec, and Leu-Tyr-Leu-|-Tyr-Trp, in which cleavage of the -Tyr-|-Leu- and -Tyr-|-Trp bonds also occurs).. Functionally, cleaves peptides in various proteins in a process that requires ATP hydrolysis. Has a chymotrypsin-like activity. Plays a major role in the degradation of misfolded proteins. This chain is ATP-dependent Clp protease proteolytic subunit 1, found in Synechococcus sp. (strain JA-2-3B'a(2-13)) (Cyanobacteria bacterium Yellowstone B-Prime).